We begin with the raw amino-acid sequence, 1066 residues long: Thyrotropin-releasing hormone-degrading ectoenzyme (1066 aa).

Over residues 1–14 (MALDGERGEQEEEK) the composition is skewed to basic and acidic residues. The tract at residues 1–43 (MALDGERGEQEEEKKKKKKKKKRKKKEEEGAEKSSSPFAATMG) is disordered. Residues 1–81 (MALDGERGEQ…ERHIAVHKRL (81 aa)) lie on the Cytoplasmic side of the membrane. Positions 15–25 (KKKKKKKKRKK) are enriched in basic residues. Position 71 is a phosphothreonine; by PKC (Thr71). A helical; Signal-anchor for type II membrane protein membrane pass occupies residues 82-102 (VLAFAVSIVALLAVTMLAVLL). Over 103–1066 (SLRFDECGAS…FQWLGKAMRH (964 aa)) the chain is Extracellular. The tract at residues 118–176 (TDGGLGGFPERDSNSSFPGSARRNHHAGGESSQRESGEVGTPGTPSAQPPSEEEREQWQ) is disordered. 5 N-linked (GlcNAc...) asparagine glycosylation sites follow: Asn131, Asn202, Asn217, Asn264, and Asn380. 446 to 450 (AAMEN) contributes to the substrate binding site. His482 is a binding site for Zn(2+). Residue Glu483 is the Proton acceptor of the active site. 2 residues coordinate Zn(2+): His486 and Glu505. Residues Asn647, Asn676, Asn691, Asn705, Asn726, Asn842, and Asn948 are each glycosylated (N-linked (GlcNAc...) asparagine).

This sequence belongs to the peptidase M1 family. As to quaternary structure, homodimer; disulfide-linked. Requires Zn(2+) as cofactor.

The protein resides in the membrane. It carries out the reaction Release of the N-terminal pyroglutamyl group from pGlu-|-His-Xaa tripeptides and pGlu-|-His-Xaa-Gly tetrapeptides.. Specific inactivation of TRH after its release. This chain is Thyrotropin-releasing hormone-degrading ectoenzyme (Trhde), found in Mus musculus (Mouse).